The following is a 239-amino-acid chain: Ribosomal RNA large subunit methyltransferase E (239 aa).

Residues 1–20 (MTKAPIAGNRTGRKLGQRVK) are disordered. A compositionally biased stretch (basic residues) spans 11–20 (TGRKLGQRVK). Residues Gly-81, Trp-83, Asp-104, Asp-120, and Asp-144 each coordinate S-adenosyl-L-methionine. The Proton acceptor role is filled by Lys-184.

This sequence belongs to the class I-like SAM-binding methyltransferase superfamily. RNA methyltransferase RlmE family.

Its subcellular location is the cytoplasm. The enzyme catalyses uridine(2552) in 23S rRNA + S-adenosyl-L-methionine = 2'-O-methyluridine(2552) in 23S rRNA + S-adenosyl-L-homocysteine + H(+). Its function is as follows. Specifically methylates the uridine in position 2552 of 23S rRNA at the 2'-O position of the ribose in the fully assembled 50S ribosomal subunit. The protein is Ribosomal RNA large subunit methyltransferase E of Rhizobium etli (strain ATCC 51251 / DSM 11541 / JCM 21823 / NBRC 15573 / CFN 42).